A 367-amino-acid chain; its full sequence is Glutamate 5-kinase (367 aa).

ATP is bound at residue K10. Substrate-binding residues include D137 and N149. Residues 169 to 170 and 211 to 217 each bind ATP; these read TD and TGGMATK. The PUA domain occupies 275–353; sequence AGEITVDDGA…QQISEILGYE (79 aa).

It belongs to the glutamate 5-kinase family.

Its subcellular location is the cytoplasm. It catalyses the reaction L-glutamate + ATP = L-glutamyl 5-phosphate + ADP. Its pathway is amino-acid biosynthesis; L-proline biosynthesis; L-glutamate 5-semialdehyde from L-glutamate: step 1/2. In terms of biological role, catalyzes the transfer of a phosphate group to glutamate to form L-glutamate 5-phosphate. The protein is Glutamate 5-kinase of Yersinia pestis bv. Antiqua (strain Antiqua).